The chain runs to 208 residues: MKKTVKNLTALLTLALAAPWALADAASELQTRLRKVSVFSADFTQNVSSANGKQVQQGSGKIQIKRPNLFRMDNKKPQESQIIADGKTLWFYDPFVEQVTANWVSDAVNNTPFVLLTSNEQSHWNQYNVQQNADTFVLKPKAKNSNIKQFDIRIDGNGVLKGFSTIEKDGQSNLYMLRNINNNDIADNLFRFSVPKGAEFDDQRKKKK.

Residues 1–23 form the signal peptide; that stretch reads MKKTVKNLTALLTLALAAPWALA.

This sequence belongs to the LolA family. In terms of assembly, monomer.

The protein resides in the periplasm. Participates in the translocation of lipoproteins from the inner membrane to the outer membrane. Only forms a complex with a lipoprotein if the residue after the N-terminal Cys is not an aspartate (The Asp acts as a targeting signal to indicate that the lipoprotein should stay in the inner membrane). The polypeptide is Outer-membrane lipoprotein carrier protein (Actinobacillus succinogenes (strain ATCC 55618 / DSM 22257 / CCUG 43843 / 130Z)).